A 764-amino-acid chain; its full sequence is 1,4-alpha-glucan branching enzyme GlgB (764 aa).

Asp-434 functions as the Nucleophile in the catalytic mechanism. The Proton donor role is filled by Glu-487.

The protein belongs to the glycosyl hydrolase 13 family. GlgB subfamily. As to quaternary structure, monomer.

The catalysed reaction is Transfers a segment of a (1-&gt;4)-alpha-D-glucan chain to a primary hydroxy group in a similar glucan chain.. It participates in glycan biosynthesis; glycogen biosynthesis. In terms of biological role, catalyzes the formation of the alpha-1,6-glucosidic linkages in glycogen by scission of a 1,4-alpha-linked oligosaccharide from growing alpha-1,4-glucan chains and the subsequent attachment of the oligosaccharide to the alpha-1,6 position. The protein is 1,4-alpha-glucan branching enzyme GlgB of Trichormus variabilis (strain ATCC 29413 / PCC 7937) (Anabaena variabilis).